Reading from the N-terminus, the 887-residue chain is DNA mismatch repair protein MutS (887 aa).

602–609 (GPNMSGKS) contacts ATP.

This sequence belongs to the DNA mismatch repair MutS family.

In terms of biological role, this protein is involved in the repair of mismatches in DNA. It is possible that it carries out the mismatch recognition step. This protein has a weak ATPase activity. In Staphylococcus saprophyticus subsp. saprophyticus (strain ATCC 15305 / DSM 20229 / NCIMB 8711 / NCTC 7292 / S-41), this protein is DNA mismatch repair protein MutS.